The following is a 243-amino-acid chain: UPF0502 protein Rmet_3697 (243 aa).

The segment covering 1–11 (MTDTPDTPDTP) has biased composition (low complexity). The segment at 1–23 (MTDTPDTPDTPMATGASSRPPLR) is disordered.

Belongs to the UPF0502 family.

The chain is UPF0502 protein Rmet_3697 from Cupriavidus metallidurans (strain ATCC 43123 / DSM 2839 / NBRC 102507 / CH34) (Ralstonia metallidurans).